Reading from the N-terminus, the 527-residue chain is MAPERLRSRALSAFKLRGLLLRGEAIKYLTEALQSISELELEDKLEKIINAVEKQPLSSNMIERSVVEAAVQECSQSVDETIEHVFNIIGAFDIPRFVYNSERKKFLPLLMTNHPAPNLFGTPRDKAEMFRERYTILHQRTHRHELFTPPVIGSHPDESGSKFQLKTIETLLGSTTKIGDAIVLGMITQLKEGKFFLEDPTGTVQLDLSKAQFHSGLYTEACFVLAEGWFEDQVFHVNAFGFPPTEPSSTTRAYYGNINFFGGPSNTSVKTSAKLKQLEEENKDAMFVFLSDVWLDQVEVLEKLRIMFAGYSPAPPTCFILCGNFSSAPYGKNQVQALKDSLKTLADIICEYPDIHQSSRFVFVPGPEDPGFGSILPRPPLAESITNEFRQRVPFSVFTTNPCRIQYCTQEITVFREDLVNKMCRNCVRFPSSNLAIPNHFVKTILSQGHLTPLPLYVCPVYWAYDYALRVYPVPDLLVIADKYDPFTTTNTECLCINPGSFPRSGFSFKVFYPSNKTVEDSKLQGF.

It belongs to the DNA polymerase epsilon subunit B family. In terms of assembly, component of the DNA polymerase epsilon complex consisting of four subunits: the catalytic subunit POLE and the accessory subunits POLE2, POLE3 and POLE4.

The protein resides in the nucleus. Its function is as follows. Accessory component of the DNA polymerase epsilon complex. Participates in DNA repair and in chromosomal DNA replication. The sequence is that of DNA polymerase epsilon subunit 2 from Homo sapiens (Human).